The following is a 197-amino-acid chain: Imidazoleglycerol-phosphate dehydratase (197 aa).

The protein belongs to the imidazoleglycerol-phosphate dehydratase family.

The protein resides in the cytoplasm. It carries out the reaction D-erythro-1-(imidazol-4-yl)glycerol 3-phosphate = 3-(imidazol-4-yl)-2-oxopropyl phosphate + H2O. Its pathway is amino-acid biosynthesis; L-histidine biosynthesis; L-histidine from 5-phospho-alpha-D-ribose 1-diphosphate: step 6/9. The polypeptide is Imidazoleglycerol-phosphate dehydratase (Methylocella silvestris (strain DSM 15510 / CIP 108128 / LMG 27833 / NCIMB 13906 / BL2)).